Here is a 424-residue protein sequence, read N- to C-terminus: MNKIKIAFLVFSLILLCTGCIEDKAVVEKNTAVFEESTINADSVSDYDIAAANNAFAFDMYSQLARRETGDHENVFFSPHSISASMAICYEGAEDTTKEQISNVFYFPSNKTVLKVRMERINDKINSVNSDYELQTANALWVQEGYPVKETYIHNVQKYYDGEVTNLDFAGKPDASRDTINEWVEARTNDKIKDLVPEDAITADARLIITNAVYFNGKWMYEFDKEMTGKKSFYPTKEEDISVDMMYTCNRFNYGETSKAKIIELPYRGNDLSMYVVLPKSNNIEKFETEFTLNDYTELKNDMEVVEEVKTTIPKFKFETKTELSNSLIEMGVVDAFGQADFSGISDSPLEISRVIHQAFIDVKEEGTEAAAATMEEMAMGVSISWDAKPKEFTADHPFMFFIEDGRTNCILFMGKVEYPEYEE.

This sequence belongs to the serpin family.

This is an uncharacterized protein from Methanosarcina acetivorans (strain ATCC 35395 / DSM 2834 / JCM 12185 / C2A).